We begin with the raw amino-acid sequence, 338 residues long: RNA 3'-terminal phosphate cyclase (338 aa).

ATP-binding positions include glutamine 103 and 283 to 287 (YLADQ). Histidine 308 acts as the Tele-AMP-histidine intermediate in catalysis.

This sequence belongs to the RNA 3'-terminal cyclase family. Type 1 subfamily.

The protein localises to the cytoplasm. The catalysed reaction is a 3'-end 3'-phospho-ribonucleotide-RNA + ATP = a 3'-end 2',3'-cyclophospho-ribonucleotide-RNA + AMP + diphosphate. In terms of biological role, catalyzes the conversion of 3'-phosphate to a 2',3'-cyclic phosphodiester at the end of RNA. The mechanism of action of the enzyme occurs in 3 steps: (A) adenylation of the enzyme by ATP; (B) transfer of adenylate to an RNA-N3'P to produce RNA-N3'PP5'A; (C) and attack of the adjacent 2'-hydroxyl on the 3'-phosphorus in the diester linkage to produce the cyclic end product. The biological role of this enzyme is unknown but it is likely to function in some aspects of cellular RNA processing. The polypeptide is RNA 3'-terminal phosphate cyclase (Escherichia coli O6:H1 (strain CFT073 / ATCC 700928 / UPEC)).